The following is a 375-amino-acid chain: Growth/differentiation factor 8 (375 aa).

Residues 1-18 (MQRLQICVYIYLFVLIVA) form the signal peptide. The propeptide occupies 19 to 266 (GPVDLSENSE…VTDTPKRSRR (248 aa)). Residue Asn-71 is glycosylated (N-linked (GlcNAc...) asparagine). Disulfide bonds link Cys-281-Cys-340, Cys-309-Cys-372, and Cys-313-Cys-374.

Belongs to the TGF-beta family. Homodimer; disulfide-linked. Interacts with WFIKKN2, leading to inhibit its activity. Interacts with FSTL3. Post-translationally, synthesized as large precursor molecule that undergoes proteolytic cleavage to generate an N-terminal propeptide and a disulfide linked C-terminal dimer, which is the biologically active molecule. The circulating form consists of a latent complex of the C-terminal dimer and other proteins, including its propeptide, which maintain the C-terminal dimer in a latent, inactive state. Ligand activation requires additional cleavage of the prodomain by a tolloid-like metalloproteinase.

The protein resides in the secreted. Functionally, acts specifically as a negative regulator of skeletal muscle growth. The sequence is that of Growth/differentiation factor 8 (MSTN) from Vulpes vulpes (Red fox).